Consider the following 148-residue polypeptide: Small ribosomal subunit protein uS15 (148 aa).

Positions Met-1–Trp-23 are disordered.

The protein belongs to the universal ribosomal protein uS15 family. Part of the 30S ribosomal subunit.

This is Small ribosomal subunit protein uS15 from Thermofilum pendens (strain DSM 2475 / Hrk 5).